Reading from the N-terminus, the 103-residue chain is MAAKIRQNDEVIVLTGKDKGKRGKVTQMLPNGKVIVEGVKIITKHEKPVPALGKAGGLVKKEAAIDASNIAIFNPKTNKADRVGFRFEDGKKVRFFKSNNEII.

The protein belongs to the universal ribosomal protein uL24 family. Part of the 50S ribosomal subunit.

One of two assembly initiator proteins, it binds directly to the 5'-end of the 23S rRNA, where it nucleates assembly of the 50S subunit. In terms of biological role, one of the proteins that surrounds the polypeptide exit tunnel on the outside of the subunit. This chain is Large ribosomal subunit protein uL24, found in Actinobacillus pleuropneumoniae serotype 3 (strain JL03).